We begin with the raw amino-acid sequence, 1391 residues long: Leucine-rich PPR motif-containing protein, mitochondrial (1391 aa).

The N-terminal 42 residues, 1–42 (MSALLAGARFLLRPGLRALPAPCVRLSPGQGRYLNNTPGHFA), are a transit peptide targeting the mitochondrion. 15 PPR repeats span residues 110–144 (LLRS…GAVF), 145–179 (DVSH…NVQP), 180–214 (NRVT…DLPI), 215–249 (TEAV…GIEP), 250–284 (GPET…EGSL), 389–425 (NLHS…GMPV), 704–738 (AIGT…DSSA), 741–775 (DTSK…DVPL), 779–813 (TTTS…GLAK), 815–850 (TSNL…NCMP), 948–982 (RDDM…NVIP), 1028–1062 (PESS…GTAM), 1063–1093 (SASA…AENH), 1100–1134 (NDAA…DKVP), and 1310–1344 (RETA…SVSP). The RNA-binding stretch occupies residues 1118–1387 (KDALASLKAM…KLKKDKADSY (270 aa)).

The protein localises to the mitochondrion. The protein resides in the nucleus. May play a role in RNA metabolism in both nuclei and mitochondria. May bind mature mRNA in the nucleus outer membrane. In mitochondria binds to poly(A) mRNA. May be involved in transcription regulation. Binds single-stranded DNA. This is Leucine-rich PPR motif-containing protein, mitochondrial (lrpprc) from Xenopus tropicalis (Western clawed frog).